A 64-amino-acid chain; its full sequence is MAQEQTKRGGGGDDEDDFASSTAAGQERREKLAEDTDDLLDEIDDVLEENAEDFVRAYVQKGGQ.

The segment covering 1–11 (MAQEQTKRGGG) has biased composition (basic and acidic residues). Residues 1–37 (MAQEQTKRGGGGDDEDDFASSTAAGQERREKLAEDTD) are disordered. The ARC ATPase binding stretch occupies residues 21-58 (STAAGQERREKLAEDTDDLLDEIDDVLEENAEDFVRAY). Positions 24 to 52 (AGQERREKLAEDTDDLLDEIDDVLEENAE) form a coiled coil. A Deamidated glutamine modification is found at Q64. An Isoglutamyl lysine isopeptide (Gln-Lys) (interchain with K-? in acceptor proteins) cross-link involves residue Q64.

It belongs to the prokaryotic ubiquitin-like protein family. Strongly interacts with the proteasome-associated ATPase ARC through a hydrophobic interface; the interacting region of Pup lies in its C-terminal half. There is one Pup binding site per ARC hexamer ring. Post-translationally, is modified by deamidation of its C-terminal glutamine to glutamate by the deamidase Dop, a prerequisite to the subsequent pupylation process.

Its pathway is protein degradation; proteasomal Pup-dependent pathway. Functionally, protein modifier that is covalently attached to lysine residues of substrate proteins, thereby targeting them for proteasomal degradation. The tagging system is termed pupylation. The chain is Prokaryotic ubiquitin-like protein Pup from Mycolicibacterium paratuberculosis (strain ATCC BAA-968 / K-10) (Mycobacterium paratuberculosis).